The primary structure comprises 297 residues: Protoheme IX farnesyltransferase 1 (297 aa).

Transmembrane regions (helical) follow at residues 23-43 (VVVLMLITSLVGMFLATRAGV), 45-65 (WSVLLFGNLGIALCAGGAAAV), 93-113 (LPALLFALALALLGMALLLMF), 117-137 (LTAWLTLASLLGYAVLYTGFL), 145-165 (IVIGGLAGAAPPLLGWVAVSG), 171-191 (PLLLVLIIFAWTPPHFWALAI), 216-236 (LHILLYTLILLAVTLLPYAIH), 241-261 (LYLVCALALGLRFLQWAWVLY), and 277-297 (IGYLFALFIALLVDHYLLLNL).

The protein belongs to the UbiA prenyltransferase family. Protoheme IX farnesyltransferase subfamily.

It localises to the cell inner membrane. The catalysed reaction is heme b + (2E,6E)-farnesyl diphosphate + H2O = Fe(II)-heme o + diphosphate. Its pathway is porphyrin-containing compound metabolism; heme O biosynthesis; heme O from protoheme: step 1/1. Its function is as follows. Converts heme B (protoheme IX) to heme O by substitution of the vinyl group on carbon 2 of heme B porphyrin ring with a hydroxyethyl farnesyl side group. The chain is Protoheme IX farnesyltransferase 1 from Pseudomonas putida (strain W619).